We begin with the raw amino-acid sequence, 500 residues long: Proline/betaine transporter (500 aa).

Topologically, residues 1–37 (MLKRKKIKPITLGDVTIIDDGKLRKAITAASLGNAME) are cytoplasmic. The chain crosses the membrane as a helical span at residues 38-58 (WFDFGVYGFVAYALGKVFFPG). The Periplasmic portion of the chain corresponds to 59–65 (ADPSVQM). Residues 66–86 (IAALATFSVPFLIRPLGGLFF) form a helical membrane-spanning segment. The Cytoplasmic segment spans residues 87–97 (GMLGDKYGRQK). A helical membrane pass occupies residues 98 to 118 (ILAITIVIMSISTFCIGLIPS). The Periplasmic portion of the chain corresponds to 119–121 (YAT). A helical transmembrane segment spans residues 122–142 (IGIWAPILLLLCKMAQGFSVG). Topologically, residues 143-169 (GEYTGASIFVAEYSPDRKRGFMGSWLD) are cytoplasmic. Residues 170–190 (FGSIAGFVLGAGVVVLISTIV) traverse the membrane as a helical segment. The Periplasmic segment spans residues 191–194 (GEEN). Residues 195–215 (FLEWGWRIPFFIALPLGIIGL) traverse the membrane as a helical segment. The Cytoplasmic portion of the chain corresponds to 216-260 (YLRHALEETPAFQQHVDKLEQGDREGLQDGPKVSFKEIATKHWRS). The chain crosses the membrane as a helical span at residues 261–281 (LLSCIGLVIATNVTYYMLLTY). At 282-297 (MPSYLSHNLHYSEDHG) the chain is on the periplasmic side. The chain crosses the membrane as a helical span at residues 298 to 318 (VLIIIAIMIGMLFVQPVMGLL). The Cytoplasmic portion of the chain corresponds to 319–325 (SDRFGRR). A helical membrane pass occupies residues 326-346 (PFVIMGSIALFALAIPAFILI). The Periplasmic portion of the chain corresponds to 347–350 (NSNV). A helical membrane pass occupies residues 351-371 (IGLIFAGLLMLAVILNCFTGV). The Cytoplasmic portion of the chain corresponds to 372–390 (MASTLPAMFPTHIRYSALA). Residues 391 to 411 (AAFNISVLIAGLTPTLAAWLV) form a helical membrane-spanning segment. Residues 412–416 (ESSQD) are Periplasmic-facing. The chain crosses the membrane as a helical span at residues 417-437 (LMMPAYYLMVIAVIGLITGIS). Residues 438–500 (MKETANRPLK…LVQQHPRIDE (63 aa)) lie on the Cytoplasmic side of the membrane. Residues 453-498 (ASDIQEAKEILGEHYDNIEQKIDDIDQEIAELQVKRSRLVQQHPRI) are a coiled coil.

The protein belongs to the major facilitator superfamily. Metabolite:H+ Symporter (MHS) family (TC 2.A.1.6) family.

It is found in the cell inner membrane. Proton symporter that senses osmotic shifts and responds by importing osmolytes such as proline, glycine betaine, stachydrine, pipecolic acid, ectoine and taurine. It is both an osmosensor and an osmoregulator which is available to participate early in the bacterial osmoregulatory response. This Salmonella typhimurium (strain LT2 / SGSC1412 / ATCC 700720) protein is Proline/betaine transporter (proP).